Reading from the N-terminus, the 157-residue chain is ABA-responsive protein ABR17 (157 aa).

The protein belongs to the BetVI family.

This is ABA-responsive protein ABR17 from Pisum sativum (Garden pea).